The chain runs to 1499 residues: DENN domain-containing protein 4B (1499 aa).

The interval 26-45 (PEEKWVPEPTGPLRPPRPAE) is disordered. Positions 34–44 (PTGPLRPPRPA) are enriched in pro residues. The MABP domain occupies 44-203 (AEPITDVAVI…AVYLCYKVGL (160 aa)). In terms of domain architecture, uDENN spans 195–369 (VYLCYKVGLA…NVPFPSPQRP (175 aa)). One can recognise a cDENN domain in the interval 390–526 (PLPLSGASFL…PYKLLLATLT (137 aa)). The dDENN domain maps to 528 to 644 (LYQQLDQTYT…ECSFGSARHA (117 aa)). The segment at 717-744 (PQEQQGALPVPGPSRSAPSSPAPRRTKQ) is disordered. Positions 729–739 (PSRSAPSSPAP) are enriched in low complexity. 2 PPR repeats span residues 775-811 (WFLC…VVLP) and 812-846 (DEVC…GIVP). Disordered stretches follow at residues 890–968 (PLKD…ARGT), 988–1115 (PRGS…SLGS), and 1204–1226 (RPSA…APAP). Positions 897–915 (QQQQQQQQQQQKQQVAEQQ) are enriched in low complexity. A compositionally biased stretch (polar residues) spans 933–942 (RPLQRQTTWA). Serine 951 is subject to Phosphoserine. Positions 1074–1083 (IPPPELPSDL) are enriched in pro residues. The residue at position 1090 (serine 1090) is a Phosphoserine. Residues 1103 to 1115 (GSTASESSASLGS) are compositionally biased toward low complexity.

The protein localises to the golgi apparatus. In terms of biological role, guanine nucleotide exchange factor (GEF) which may activate RAB10. Promotes the exchange of GDP to GTP, converting inactive GDP-bound Rab proteins into their active GTP-bound form. The chain is DENN domain-containing protein 4B (Dennd4b) from Mus musculus (Mouse).